The primary structure comprises 1268 residues: MSSVAVLTQESFAEHRSGLVPQQIKVATLNSEEESDPPTYKDAFPPLPEKAACLESAQEPAGAWGNKIRPIKASVITQVFHVPLEERKYKDMNQFGEGEQAKICLEIMQRTGAHLELSLAKDQGLSIMVSGKLDAVMKARKDIVARLQTQASATVAIPKEHHRFVIGKNGEKLQDLELKTATKIQIPRPDDPSNQIKITGTKEGIEKARHEVLLISAEQDKRAVERLEVEKAFHPFIAGPYNRLVGEIMQETGTRINIPPPSVNRTEIVFTGEKEQLAQAVARIKKIYEEKKKKTTTIAVEVKKSQHKYVIGPKGNSLQEILERTGVSVEIPPSDSISETVILRGEPEKLGQALTEVYAKANSFTVSSVAAPSWLHRFIIGKKGQNLAKITQQMPKVHIEFTEGEDKITLEGPTEDVNVAQEQIEGMVKDLINRMDYVEINIDHKFHRHLIGKSGANINRIKDQYKVSVRIPPDSEKSNLIRIEGDPQGVQQAKRELLELASRMENERTKDLIIEQRFHRTIIGQKGERIREIRDKFPEVIINFPDPAQKSDIVQLRGPKNEVEKCTKYMQKMVADLVENSYSISVPIFKQFHKNIIGKGGANIKKIREESNTKIDLPAENSNSETIIITGKRANCEAARSRILSIQKDLANIAEVEVSIPAKLHNSLIGTKGRLIRSIMEECGGVHIHFPVEGSGSDTVVIRGPSSDVEKAKKQLLHLAEEKQTKSFTVDIRAKPEYHKFLIGKGGGKIRKVRDSTGARVIFPAAEDKDQDLITIIGKEDAVREAQKELEALIQNLDNVVEDSMLVDPKHHRHFVIRRGQVLREIAEEYGGVMVSFPRSGTQSDKVTLKGAKDCVEAAKKRIQEIIEDLEAQVTLECAIPQKFHRSVMGPKGSRIQQITRDFSVQIKFPDREENAVHSTEPVVQENGDEAGEGREAKDCDPGSPRRCDIIIISGRKEKCEAAKEALEALVPVTIEVEVPFDLHRYVIGQKGSGIRKMMDEFEVNIHVPAPELQSDIIAITGLAANLDRAKAGLLERVKELQAEQEDRALRSFKLSVTVDPKYHPKIIGRKGAVITQIRLEHDVNIQFPDKDDGNQPQDQITITGYEKNTEAARDAILRIVGELEQMVSEDVPLDHRVHARIIGARGKAIRKIMDEFKVDIRFPQSGAPDPNCVTVTGLPENVEEAIDHILNLEEEYLADVVDSEALQVYMKPPAHEEAKAPSRGFVVRDAPWTASSSEKAPDMSSSEEFPSFGAQVAPKTLPWGPKR.

Serine 2 is subject to N-acetylserine. Threonine 8 bears the Phosphothreonine mark. Serine 11, serine 31, and serine 35 each carry phosphoserine. KH domains lie at 158 to 229, 230 to 302, 303 to 371, 372 to 442, 443 to 514, 515 to 588, 589 to 660, 661 to 734, 735 to 807, 808 to 880, 881 to 979, 980 to 1059, 1060 to 1134, and 1135 to 1209; these read PKEH…RLEV, EKAF…AVEV, KKSQ…SVAA, PSWL…EINI, DHKF…DLII, EQRF…SVPI, FKQF…EVSI, PAKL…DIRA, KPEY…SMLV, DPKH…ECAI, PQKF…EVEV, PFDL…SVTV, DPKY…DVPL, and DHRV…ALQV. A phosphothreonine mark is found at threonine 295 and threonine 296. Serine 317 is modified (phosphoserine). A Phosphotyrosine modification is found at tyrosine 437. Serine 645 is modified (phosphoserine). Residues 914–944 form a disordered region; that stretch reads ENAVHSTEPVVQENGDEAGEGREAKDCDPGS. A compositionally biased stretch (basic and acidic residues) spans 932–944; the sequence is GEGREAKDCDPGS. At lysine 991 the chain carries N6-acetyllysine. The disordered stretch occupies residues 1233–1268; sequence WTASSSEKAPDMSSSEEFPSFGAQVAPKTLPWGPKR. The span at 1234-1249 shows a compositional bias: polar residues; it reads TASSSEKAPDMSSSEE. A phosphoserine mark is found at serine 1247 and serine 1252.

It localises to the cytoplasm. It is found in the nucleus. Appears to play a role in cell sterol metabolism. It may function to protect cells from over-accumulation of cholesterol. This Homo sapiens (Human) protein is Vigilin (HDLBP).